The following is a 359-amino-acid chain: 3-dehydroquinate synthase (359 aa).

Residues 69-74 (DGEKYK), 103-107 (GVVGD), 127-128 (TT), lysine 140, lysine 149, and 167-170 (TLDT) contribute to the NAD(+) site. Glutamate 182, histidine 245, and histidine 262 together coordinate Zn(2+).

The protein belongs to the sugar phosphate cyclases superfamily. Dehydroquinate synthase family. Co(2+) is required as a cofactor. The cofactor is Zn(2+). NAD(+) serves as cofactor.

The protein resides in the cytoplasm. It carries out the reaction 7-phospho-2-dehydro-3-deoxy-D-arabino-heptonate = 3-dehydroquinate + phosphate. The protein operates within metabolic intermediate biosynthesis; chorismate biosynthesis; chorismate from D-erythrose 4-phosphate and phosphoenolpyruvate: step 2/7. Catalyzes the conversion of 3-deoxy-D-arabino-heptulosonate 7-phosphate (DAHP) to dehydroquinate (DHQ). This chain is 3-dehydroquinate synthase, found in Ruthia magnifica subsp. Calyptogena magnifica.